A 56-amino-acid chain; its full sequence is Alpha-conotoxin TxIA (56 aa).

An N-terminal signal peptide occupies residues 1 to 16 (MFTVFLLVVLATAVVS). Positions 17-39 (FTSDRASDDGKAAASDLITLTIK) are excised as a propeptide. 2 disulfides stabilise this stretch: C41/C47 and C42/C55. The tract at residues 43–45 (SRP) is ser-Xaa-Pro motif, crucial for potent interaction with nAChR. P45 and P46 each carry 4-hydroxyproline; partial. C55 carries the post-translational modification Cysteine amide.

The protein belongs to the conotoxin A superfamily. In terms of processing, exists in 4 different forms, depending on hydroxylations. Tx1a-PP does not contain hydroxyproline, tx1a-OP has one hydroxyproline at position 45, tx1a-PO has one hydroxyproline at position 46, and tx1a-PP has two hydroxyprolines at positions 45 and 46. Expressed by the venom duct. Tx1a that containing 1 or 2 non-hydroxylated prolines are mostly present in part 5 of the venom duct (distal part near the pharynx), whereas tx1a-OO (with 2 hydroxyprolines) is mostly present in part 4 of the venom duct (follewed by part 3).

The protein localises to the secreted. Functionally, alpha-conotoxins act on postsynaptic membranes, they bind to the nicotinic acetylcholine receptors (nAChR) and thus inhibit them. This toxin inhibits rat alpha-3-beta-2/CHRNA3-CHRNB2 (IC(50)=3.5 nM), rat alpha-7/CHRNA7 (IC(50)=392 nM) nAChR, and the L.stagnalis soluble acetylcholine receptor (all tested without hydroxyproline). This chain is Alpha-conotoxin TxIA, found in Conus textile (Cloth-of-gold cone).